The primary structure comprises 609 residues: mRNA-decapping enzyme 1B (609 aa).

Residue A2 is modified to N-acetylalanine. Position 147 is a phosphoserine (S147). Position 191 is a phosphotyrosine (Y191). Disordered regions lie at residues 201-222 (PVKPSENQQQRIPQPNQTLDPE) and 243-264 (TVEPPQTLHQQQQQQQEKLPIR). The span at 205-219 (SENQQQRIPQPNQTL) shows a compositional bias: polar residues. A phosphoserine mark is found at S272 and S333. Disordered stretches follow at residues 326–345 (TGPVRPGSPHNIGTSRGVQN) and 359–438 (TPGA…SSGV). A compositionally biased stretch (polar residues) spans 336–345 (NIGTSRGVQN). Residues 368-378 (PSTPAPASSAA) show a composition bias toward low complexity. T389 is modified (phosphothreonine). The segment covering 418–438 (QSTLPRQTLPISGNQTGSSGV) has biased composition (polar residues). Phosphoserine is present on residues S440 and S503.

Belongs to the DCP1 family. As to quaternary structure, interacts with DCP1A.

Its subcellular location is the cytoplasm. It is found in the nucleus. The enzyme catalyses a 5'-end (N(7)-methyl 5'-triphosphoguanosine)-ribonucleoside in mRNA + H2O = N(7)-methyl-GDP + a 5'-end phospho-ribonucleoside in mRNA + 2 H(+). Its function is as follows. May play a role in the degradation of mRNAs, both in normal mRNA turnover and in nonsense-mediated mRNA decay. May remove the 7-methyl guanine cap structure from mRNA molecules, yielding a 5'-phosphorylated mRNA fragment and 7m-GDP. This Pongo abelii (Sumatran orangutan) protein is mRNA-decapping enzyme 1B (DCP1B).